The primary structure comprises 1256 residues: Putative protein DDB_G0292252 (1256 aa).

Disordered regions lie at residues 1-53 (MSDD…NNNN), 145-243 (LLNG…SISR), 898-951 (EQQQ…PVET), and 1069-1136 (SHPT…ATIS). A compositionally biased stretch (low complexity) spans 147–214 (NGNNSNNNSN…NGNNINTSNG (68 aa)). Polar residues predominate over residues 222–243 (QTESTEQDFTSTSQNSTPSISR). 2 stretches are compositionally biased toward low complexity: residues 898–916 (EQQQ…SNNE) and 925–942 (TTAA…TTTT). Residues 1069–1079 (SHPTIQSTSSP) show a composition bias toward polar residues. The span at 1080–1136 (STSSSNNNNSTTTATNNNGNNGNNNNGNGNNNNNNNNNNNNNNNNNNNNNNGPATIS) shows a compositional bias: low complexity.

The chain is Putative protein DDB_G0292252 from Dictyostelium discoideum (Social amoeba).